The primary structure comprises 155 residues: Ciliary microtubule inner protein 2C (155 aa).

Belongs to the CIMIP2 family.

Its subcellular location is the cytoplasm. The protein localises to the cytoskeleton. The protein resides in the cilium axoneme. Microtubule inner protein (MIP) part of the dynein-decorated doublet microtubules (DMTs) in cilia axoneme, which is required for motile cilia beating. This chain is Ciliary microtubule inner protein 2C (cimip2ca), found in Xenopus laevis (African clawed frog).